Consider the following 357-residue polypeptide: Thiamine thiazole synthase 3, chloroplastic (357 aa).

Residues 1-51 (MSISAAGVATGLGANVELKSNVGSSSSSVAGVRLFTSRKAQLRRCAAPATS) constitute a chloroplast transit peptide. Residues alanine 103, 123–124 (EQ), glycine 131, and alanine 196 each bind substrate. A 2,3-didehydroalanine (Cys) modification is found at cysteine 225. Substrate is bound by residues aspartate 227, histidine 242, methionine 294, and 304–306 (RMG).

Belongs to the THI4 family. As to quaternary structure, homooctamer. Fe cation is required as a cofactor. During the catalytic reaction, a sulfide is transferred from Cys-225 to a reaction intermediate, generating a dehydroalanine residue.

The protein resides in the plastid. It is found in the chloroplast. The catalysed reaction is [ADP-thiazole synthase]-L-cysteine + glycine + NAD(+) = [ADP-thiazole synthase]-dehydroalanine + ADP-5-ethyl-4-methylthiazole-2-carboxylate + nicotinamide + 3 H2O + 2 H(+). Involved in biosynthesis of the thiamine precursor thiazole. Catalyzes the conversion of NAD and glycine to adenosine diphosphate 5-(2-hydroxyethyl)-4-methylthiazole-2-carboxylic acid (ADT), an adenylated thiazole intermediate. The reaction includes an iron-dependent sulfide transfer from a conserved cysteine residue of the protein to a thiazole intermediate. The enzyme can only undergo a single turnover, which suggests it is a suicide enzyme. May have additional roles in adaptation to various stress conditions and in DNA damage tolerance. The sequence is that of Thiamine thiazole synthase 3, chloroplastic from Physcomitrium patens (Spreading-leaved earth moss).